The sequence spans 567 residues: Alpha-glucosidase (567 aa).

A signal peptide spans 1–17 (MKAVIVFCLMALSIVDA). Asparagine 88 and asparagine 123 each carry an N-linked (GlcNAc...) asparagine glycan. The active-site Nucleophile is the aspartate 223. The N-linked (GlcNAc...) asparagine glycan is linked to asparagine 247. Glutamate 286 functions as the Proton donor in the catalytic mechanism. Asparagine 290, asparagine 313, asparagine 319, asparagine 499, and asparagine 507 each carry an N-linked (GlcNAc...) asparagine glycan.

Monomer. In terms of tissue distribution, expressed specifically in the hypopharyngeal glands of worker bees. Also found in the brain of worker bees (at protein level).

The enzyme catalyses Hydrolysis of terminal, non-reducing (1-&gt;4)-linked alpha-D-glucose residues with release of alpha-D-glucose.. Converts sucrose in nectar to glucose and fructose. The sequence is that of Alpha-glucosidase from Apis mellifera (Honeybee).